We begin with the raw amino-acid sequence, 428 residues long: tRNA(Ile)-lysidine synthase (428 aa).

ATP is bound at residue 25–30; sequence SGGIDS.

This sequence belongs to the tRNA(Ile)-lysidine synthase family.

The protein resides in the cytoplasm. It carries out the reaction cytidine(34) in tRNA(Ile2) + L-lysine + ATP = lysidine(34) in tRNA(Ile2) + AMP + diphosphate + H(+). Functionally, ligates lysine onto the cytidine present at position 34 of the AUA codon-specific tRNA(Ile) that contains the anticodon CAU, in an ATP-dependent manner. Cytidine is converted to lysidine, thus changing the amino acid specificity of the tRNA from methionine to isoleucine. This chain is tRNA(Ile)-lysidine synthase, found in Haemophilus ducreyi (strain 35000HP / ATCC 700724).